A 319-amino-acid polypeptide reads, in one-letter code: Putative protein phosphatase 2C 23 (319 aa).

In terms of domain architecture, PPM-type phosphatase spans 73 to 314 (AVRMESASCY…DDITVVVACI (242 aa)). Residues Gly102, Asp235, and Asp305 each coordinate Mn(2+).

Belongs to the PP2C family. The cofactor is Mg(2+).

The enzyme catalyses O-phospho-L-seryl-[protein] + H2O = L-seryl-[protein] + phosphate. The catalysed reaction is O-phospho-L-threonyl-[protein] + H2O = L-threonyl-[protein] + phosphate. The protein is Putative protein phosphatase 2C 23 of Oryza sativa subsp. japonica (Rice).